The chain runs to 780 residues: Oocyte zinc finger protein XlCOF8.4 (780 aa).

C2H2-type zinc fingers lie at residues 250 to 272, 278 to 300, 306 to 328, 334 to 356, 362 to 384, 390 to 412, 418 to 440, 446 to 468, 474 to 496, 618 to 640, 646 to 668, 674 to 696, 702 to 724, 730 to 752, and 758 to 780; these read FPCS…RRTH, FSCS…HRTH, FSCS…QKTH, YSCS…RRTH, YSCS…WKTH, FSCV…YRTH, FSCF…LKIH, LSCS…QKTH, FSCS…RRTH, YSCS…WRTH, FSCT…HRTH, and FSCS…FQLH.

This sequence belongs to the krueppel C2H2-type zinc-finger protein family.

The protein localises to the nucleus. May be involved in transcriptional regulation. The sequence is that of Oocyte zinc finger protein XlCOF8.4 from Xenopus laevis (African clawed frog).